The chain runs to 59 residues: Large ribosomal subunit protein bL32 (59 aa).

Positions 1 to 20 (MAVQKNKPTRSKRGMRRSHD) are disordered. The segment covering 7–19 (KPTRSKRGMRRSH) has biased composition (basic residues).

This sequence belongs to the bacterial ribosomal protein bL32 family.

This Wigglesworthia glossinidia brevipalpis protein is Large ribosomal subunit protein bL32.